The chain runs to 142 residues: Small ribosomal subunit protein bS6 (142 aa).

A compositionally biased stretch (basic and acidic residues) spans 110–133; it reads NKKPSHAKEKHEKTEHTHSHHTEE. Residues 110 to 142 form a disordered region; that stretch reads NKKPSHAKEKHEKTEHTHSHHTEETESVGSHSK.

The protein belongs to the bacterial ribosomal protein bS6 family.

Binds together with bS18 to 16S ribosomal RNA. The chain is Small ribosomal subunit protein bS6 from Helicobacter pylori (strain Shi470).